The primary structure comprises 136 residues: Large-conductance mechanosensitive channel (136 aa).

4 helical membrane passes run 9–29, 32–52, 54–74, and 79–99; these read AFAS…GAAF, IVSS…LGGV, FSDL…VVIA, and IQTV…LKAI.

This sequence belongs to the MscL family. Homopentamer.

The protein localises to the cell inner membrane. In terms of biological role, channel that opens in response to stretch forces in the membrane lipid bilayer. May participate in the regulation of osmotic pressure changes within the cell. This Shewanella oneidensis (strain ATCC 700550 / JCM 31522 / CIP 106686 / LMG 19005 / NCIMB 14063 / MR-1) protein is Large-conductance mechanosensitive channel.